Here is a 294-residue protein sequence, read N- to C-terminus: MSNSNRVLKLGLPKGSLQDSTIELFGNAGFHFSVQSRSYFPSIDDDELEAILIRAQEMAHYVELGAFDVGLTGKDWIIETGADVVEVADLVYSKASMRPVRWVLAVPENSPIKTVKDLEGKHIATEVVNITRKYLESNGVTAAVEFSWGATEVKPPDLADAIVEVTETGSSLRANKLRIVETILESNTKLIANKSSWDDPWKREKIESMALMLQGAINAQGKVGLKMNAPESALEAITAMIPALRQPTVSHLAHNQWVALEVIVLEREVRKLIPELKKAGAEGIFEYDINKLID.

The protein belongs to the ATP phosphoribosyltransferase family. Long subfamily. Requires Mg(2+) as cofactor.

The protein localises to the cytoplasm. The catalysed reaction is 1-(5-phospho-beta-D-ribosyl)-ATP + diphosphate = 5-phospho-alpha-D-ribose 1-diphosphate + ATP. It functions in the pathway amino-acid biosynthesis; L-histidine biosynthesis; L-histidine from 5-phospho-alpha-D-ribose 1-diphosphate: step 1/9. Feedback inhibited by histidine. Its function is as follows. Catalyzes the condensation of ATP and 5-phosphoribose 1-diphosphate to form N'-(5'-phosphoribosyl)-ATP (PR-ATP). Has a crucial role in the pathway because the rate of histidine biosynthesis seems to be controlled primarily by regulation of HisG enzymatic activity. The protein is ATP phosphoribosyltransferase of Chlorobium phaeovibrioides (strain DSM 265 / 1930) (Prosthecochloris vibrioformis (strain DSM 265)).